Here is a 435-residue protein sequence, read N- to C-terminus: Cytochrome c biogenesis protein CcsB (435 aa).

The next 3 helical transmembrane spans lie at leucine 14–leucine 34, serine 72–arginine 92, and valine 162–alanine 182.

It belongs to the Ccs1/CcsB family. As to quaternary structure, may interact with CcsA.

It localises to the cellular thylakoid membrane. In terms of biological role, required during biogenesis of c-type cytochromes (cytochrome c6 and cytochrome f) at the step of heme attachment. This chain is Cytochrome c biogenesis protein CcsB, found in Synechococcus sp. (strain CC9311).